A 2351-amino-acid polypeptide reads, in one-letter code: Coagulation factor VIII (2351 aa).

An N-terminal signal peptide occupies residues 1-19; the sequence is MQIELSTCFFLCLLRFCFS. Plastocyanin-like domains lie at 20 to 198 and 206 to 348; these read ATRR…LLVC and EKTQ…VDSC. An F5/8 type A 1 domain is found at 20–348; that stretch reads ATRRYYLGAV…MEAYVKVDSC (329 aa). Asn-60 is a glycosylation site (N-linked (GlcNAc...) asparagine). Residues Cys-172 and Cys-198 are joined by a disulfide bond. Asn-258 carries N-linked (GlcNAc...) asparagine glycosylation. A disulfide bond links Cys-267 and Cys-348. Tyr-365 carries the post-translational modification Sulfotyrosine. 2 consecutive Plastocyanin-like domains span residues 399–573 and 583–730; these read KTWV…LLIC and NQIM…VSSC. The 332-residue stretch at 399-730 folds into the F5/8 type A 2 domain; that stretch reads KTWVHYIAAE…MTALLKVSSC (332 aa). A disulfide bridge links Cys-547 with Cys-573. Asn-601 carries an N-linked (GlcNAc...) asparagine glycan. Cys-649 and Cys-730 are oxidised to a cystine. Sulfotyrosine occurs at positions 737, 738, and 742. The interval 760-1667 is b; the sequence is SFSQNSRHPS…NPPVLKRHQR (908 aa). Asn-776, Asn-803, Asn-847, and Asn-919 each carry an N-linked (GlcNAc...) asparagine glycan. Disordered stretches follow at residues 906–928 and 941–961; these read STIP…PPSM and FGKK…SEEN. Residues Asn-962, Asn-982, Asn-1020, Asn-1024, Asn-1074, Asn-1085, Asn-1204, Asn-1274, Asn-1278, Asn-1301, Asn-1319, Asn-1431, and Asn-1461 are each glycosylated (N-linked (GlcNAc...) asparagine). 2 positions are modified to sulfotyrosine: Tyr-1683 and Tyr-1699. 2 consecutive Plastocyanin-like domains span residues 1713-1877 and 1887-2040; these read KTRH…LLVC and GRQV…SNKC. One can recognise an F5/8 type A 3 domain in the interval 1713–2040; the sequence is KTRHYFIAAV…TLFLVYSNKC (328 aa). Residue Asn-1829 is glycosylated (N-linked (GlcNAc...) asparagine). Disulfide bonds link Cys-1851-Cys-1877, Cys-1918-Cys-1922, Cys-2040-Cys-2188, and Cys-2193-Cys-2345. F5/8 type C domains lie at 2040–2188 and 2193–2345; these read CQTP…LMGC and CSMP…VLGC. The N-linked (GlcNAc...) asparagine glycan is linked to Asn-2137.

It belongs to the multicopper oxidase family. In terms of assembly, interacts with VWF/vWF. vWF binding is essential for the stabilization of F8 in circulation. Post-translationally, sulfation on Tyr-1699 is essential for binding vWF. Proteolytically cleaved by cathepsin CTSG to produce a partially activated form.

It localises to the secreted. It is found in the extracellular space. Functionally, factor VIII, along with calcium and phospholipid, acts as a cofactor for F9/factor IXa when it converts F10/factor X to the activated form, factor Xa. This Homo sapiens (Human) protein is Coagulation factor VIII (F8).